The sequence spans 454 residues: uncharacterized protein (454 aa).

An HNH domain is found at 364–405; that stretch reads CSRPGCDAPAYHSEVHHVTPWTTTHRTDINDLTLACGPDNRL. The segment at 415–434 is disordered; it reads NAKGDTEWLPPAHLDHGQPR.

The protein belongs to the Rv1128c/1148c/1588c/1702c/1945/3466 family.

This is an uncharacterized protein from Mycobacterium tuberculosis (strain CDC 1551 / Oshkosh).